The sequence spans 215 residues: [PSI+] inducibility protein 3 (215 aa).

The residue at position 2 (Ser-2) is an N-acetylserine. Ser-52 and Ser-55 each carry phosphoserine. The region spanning 54–113 (ASLEYVEALYQFDPQQDGDLGLKPGDKVQLLEKLSPEWYKGSCNGRTGIFPANYVKPAFS) is the SH3 domain. Residue Lys-80 forms a Glycyl lysine isopeptide (Lys-Gly) (interchain with G-Cter in ubiquitin) linkage. A disordered region spans residues 114–189 (GSNGPSNLPP…HQSSHSHLKS (76 aa)). The PY motif motif lies at 124–127 (PPQY).

The protein belongs to the LSB1 family. In terms of assembly, interacts with LAS17, RSP5 and SUP35. Post-translationally, ubiquitinated by RSP5. Ubiquitination reduces the protein abundance and its prion-inducing ability.

The protein localises to the cytoplasm. It is found in the nucleus. Its subcellular location is the cytoskeleton. It localises to the actin patch. In terms of biological role, overproduction promotes the de novo induction of the [PSI+] prion form of SUP35. The prion-inducing effect depends on the association with the actin cytoskeleton. Also implicated in prion maintenance during heat stress. This chain is [PSI+] inducibility protein 3 (PIN3), found in Saccharomyces cerevisiae (strain ATCC 204508 / S288c) (Baker's yeast).